A 471-amino-acid polypeptide reads, in one-letter code: Retinoic acid receptor RXR-beta-A (471 aa).

The tract at residues 1–34 (MGDSRDSRSPDSSSVSSPPSGQRSPPLAPSAAAM) is disordered. The tract at residues 1–102 (MGDSRDSRSP…HAVSSSDDVK (102 aa)) is modulating. Low complexity predominate over residues 10–25 (PDSSSVSSPPSGQRSP). The segment at residues 122–197 (KRLCAICGDR…MGMKREVVQD (76 aa)) is a DNA-binding region (nuclear receptor). 2 consecutive NR C4-type zinc fingers follow at residues 125-145 (CAIC…CEGC) and 161-185 (CRDN…YQKC). Residues 196–216 (QDERQRSVQEERQRNKERDGE) are compositionally biased toward basic and acidic residues. A disordered region spans residues 196–226 (QDERQRSVQEERQRNKERDGEVESSSAANEE). The hinge stretch occupies residues 198 to 221 (ERQRSVQEERQRNKERDGEVESSS). In terms of domain architecture, NR LBD spans 224-467 (NEEMPVEKIL…TFLMEMLEAP (244 aa)).

It belongs to the nuclear hormone receptor family. NR2 subfamily. In terms of assembly, homodimer. Heterodimer; with a rar molecule. Binds DNA preferentially as a rar/rxr heterodimer. Heterodimerizes with rarga. As to expression, shows uniform expression from the blastula to mid-gastrula stages. At 12 hours post-fertilization (hpf), expressed ubiquitously but more weakly. At 24 hpf, restricted to the ventral diencephalon, pharangeal endoderm and trunk and tail mesoderm; mesoderm expression is in medial cells of each somite along the dorsoventral axis, forming stripes. At 48 hpf, expressed in forebrain, eye, midbrain and anterior hindbrain.

It localises to the nucleus. Receptor for retinoic acid. Retinoic acid receptors bind as heterodimers to their target response elements in response to their ligands, all-trans or 9-cis retinoic acid, and regulate gene expression in various biological processes. The rar/rxr heterodimers bind to the retinoic acid response elements (RARE) composed of tandem 5'-AGGTCA-3' sites known as DR1-DR5. The high affinity ligand for rxrs is 9-cis retinoic acid. The protein is Retinoic acid receptor RXR-beta-A (rxrba) of Danio rerio (Zebrafish).